The sequence spans 128 residues: Large ribosomal subunit protein bL19 (128 aa).

It belongs to the bacterial ribosomal protein bL19 family.

Its function is as follows. This protein is located at the 30S-50S ribosomal subunit interface and may play a role in the structure and function of the aminoacyl-tRNA binding site. This Ralstonia nicotianae (strain ATCC BAA-1114 / GMI1000) (Ralstonia solanacearum) protein is Large ribosomal subunit protein bL19.